The primary structure comprises 97 residues: Carboxysome shell protein CsoS1B (97 aa).

One can recognise a BMC domain in the interval 8–93; that stretch reads ALGMIETRGL…PHKEVEPVLT (86 aa).

The protein belongs to the bacterial microcompartments protein family. CsoS1 subfamily. Homohexamer with a small central pore.

The protein localises to the carboxysome. One of shell proteins of the carboxysome, a polyhedral inclusion where RuBisCO (ribulose bisphosphate carboxylase, ccbL-ccbS) is sequestered. Assembles into hexamers which make sheets that form the facets of the polyhedral carboxysome. The shell probably limits the diffusion of CO(2) into and out of the carboxysome. The sequence is that of Carboxysome shell protein CsoS1B from Hydrogenovibrio crunogenus (strain DSM 25203 / XCL-2) (Thiomicrospira crunogena).